Reading from the N-terminus, the 270-residue chain is 3-methyl-2-oxobutanoate hydroxymethyltransferase (270 aa).

2 residues coordinate Mg(2+): aspartate 50 and aspartate 89. 3-methyl-2-oxobutanoate is bound by residues 50 to 51, aspartate 89, and lysine 118; that span reads DS. Glutamate 120 contacts Mg(2+). Glutamate 187 functions as the Proton acceptor in the catalytic mechanism.

It belongs to the PanB family. Homodecamer; pentamer of dimers. Mg(2+) serves as cofactor.

Its subcellular location is the cytoplasm. It carries out the reaction 3-methyl-2-oxobutanoate + (6R)-5,10-methylene-5,6,7,8-tetrahydrofolate + H2O = 2-dehydropantoate + (6S)-5,6,7,8-tetrahydrofolate. Its pathway is cofactor biosynthesis; (R)-pantothenate biosynthesis; (R)-pantoate from 3-methyl-2-oxobutanoate: step 1/2. In terms of biological role, catalyzes the reversible reaction in which hydroxymethyl group from 5,10-methylenetetrahydrofolate is transferred onto alpha-ketoisovalerate to form ketopantoate. The sequence is that of 3-methyl-2-oxobutanoate hydroxymethyltransferase from Helicobacter pylori (strain P12).